Reading from the N-terminus, the 110-residue chain is Keratin, type II cytoskeletal 8 (110 aa).

Residues 1-12 (MSTSGPRAFSSR) are head. The IF rod domain occupies 1 to 110 (MSTSGPRAFS…LDIEIATYRK (110 aa)). Phosphoserine is present on residues Ser-2, Ser-4, Ser-10, and Ser-11. At Arg-12 the chain carries Omega-N-methylarginine. Residues 13-25 (FASFIDKVRWSLL) are coil 1A. The interval 26–39 (QQQKSNMDNMFESY) is linker 1. A Glycyl lysine isopeptide (Lys-Gly) (interchain with G-Cter in SUMO2) cross-link involves residue Lys-29. Residues 40–79 (INNLRDVDEAYMNKVELESRLEGLTDEINFLRQIHEEEIR) are coil 1B. An N6-acetyllysine modification is found at Lys-53. Phosphoserine occurs at positions 80 and 85. A linker 12 region spans residues 80 to 86 (SLDMDSI). The segment at 87–110 (IAEVRHGDDLRRLALDIEIATYRK) is coil 2. The tract at residues 88–99 (AEVRHGDDLRRL) is necessary for interaction with PNN. A Glycyl lysine isopeptide (Lys-Gly) (interchain with G-Cter in SUMO2) cross-link involves residue Lys-110.

It belongs to the intermediate filament family. Heterotetramer of two type I and two type II keratins. Forms a heterodimer with KRT18. Associates with KRT20. Interacts with PNN. When associated with KRT19, interacts with DMD. Interacts with TCHP. Interacts with APEX1. Interacts with GPER1. Interacts with EPPK1. Interacts with PKP1 and PKP2. In terms of processing, O-glycosylated. O-GlcNAcylation at multiple sites increases solubility, and decreases stability by inducing proteasomal degradation. Post-translationally, O-glycosylated (O-GlcNAcylated), in a cell cycle-dependent manner.

The protein localises to the cytoplasm. The protein resides in the nucleus. Its subcellular location is the nucleoplasm. It localises to the nucleus matrix. Its function is as follows. Together with KRT19, helps to link the contractile apparatus to dystrophin at the costameres of striated muscle. This is Keratin, type II cytoskeletal 8 from Mesocricetus auratus (Golden hamster).